The chain runs to 436 residues: Histone acetyltransferase RTT109 (436 aa).

Residues 2–404 enclose the Rtt109-type HAT domain; it reads SLNDFLSSVL…LQSLTGKREH (403 aa). Acetyl-CoA contacts are provided by residues 88–90 and 97–101; these read ADT and RVSVR. The interaction with VPS75 stretch occupies residues 128–170; sequence RSYKKISPELISAASTPARTLRILARRLKQSGSTVLKEIESPR. Residues Phe-192, Ala-196, 211–213, and Trp-221 each bind acetyl-CoA; that span reads HIL. The active-site Proton donor/acceptor is the Asp-288. Lys-290 carries the post-translational modification N6-acetyllysine; by autocatalysis. Residues 419-433 form an interaction with ASF1 region; the sequence is LAITMLKPRKKAKAL.

The protein belongs to the RTT109 family. In terms of assembly, forms a complex composed of two RTT109 subunits and one VPS75 homodimer; each RTT109 subunit interacts predominantly with VPS75 instead of interacting with the other RTT109 subunit. Interacts with VPS75; the interaction is direct. Interacts (via C-terminus) with ASF1; the interaction is direct. Interacts with histone H3/H4 heterodimers via histone H3.

Its subcellular location is the nucleus. The catalysed reaction is L-lysyl-[histone] + acetyl-CoA = N(6)-acetyl-L-lysyl-[histone] + CoA + H(+). The enzyme catalyses L-lysyl-[protein] + acetyl-CoA = N(6)-acetyl-L-lysyl-[protein] + CoA + H(+). Histone chaperone-dependent acetylase that modifies 'Lys-9', 'Lys-14', 'Lys-23', 'Lys-27', and 'Lys-56' on histone H3 (H3K9Ac, H3K14Ac and H3K23Ac, H3K27Ac, and H3K56Ac) to promote nucleosome assembly, genomic stability, DNA repair and transcriptional regulation during mitotic S-phase. Its residue selectivity is influenced by the acetylation status of histone H3, and also the presence of histone chaperone ASF1 that shifts selectivity to 'Lys-56' when H3K14Ac is already present. H3K56 acetylation weakens the interaction between the histone core and the surrounding DNA in the nucleosomal particle and drives chromatin disassembly. Autoacetylates. Independently of acetyltransferase activity, stimulates histone deposition by VPS75. Involved in regulation of Ty1 transposition. In Saccharomyces cerevisiae (strain ATCC 204508 / S288c) (Baker's yeast), this protein is Histone acetyltransferase RTT109.